The primary structure comprises 78 residues: Serine rich endogenous peptide 19 (78 aa).

The N-terminal stretch at 1–25 (MCNIVVFLLTLTLFLFSGLSNTAFA) is a signal peptide. The SCOOP motif signature appears at 50–64 (KIEVDGSCSRRAPGR). Positions 56 to 58 (SCS) match the SxS motif essential for MIK2 binding motif. A disordered region spans residues 57–78 (CSRRAPGRRRPPNRPPKPCTKP). The segment covering 69–78 (NRPPKPCTKP) has biased composition (pro residues).

It belongs to the serine rich endogenous peptide (SCOOP) phytocytokine family. Interacts with MIK2 (via extracellular leucine-rich repeat domain); this interaction triggers the formation of complex between MIK2 and the BAK1/SERK3 and SERK4 coreceptors, and subsequent BAK1 activation by phosphorylation.

It is found in the cell membrane. The protein localises to the secreted. The protein resides in the extracellular space. It localises to the apoplast. Its function is as follows. Brassicaceae-specific phytocytokine (plant endogenous peptide released into the apoplast) perceived by MIK2 in a BAK1/SERK3 and SERK4 coreceptors-dependent manner, that modulates various physiological and antimicrobial processes including growth prevention and reactive oxygen species (ROS) response regulation. The chain is Serine rich endogenous peptide 19 from Arabidopsis thaliana (Mouse-ear cress).